A 627-amino-acid chain; its full sequence is DNA mismatch repair protein MutL (627 aa).

The protein belongs to the DNA mismatch repair MutL/HexB family.

This protein is involved in the repair of mismatches in DNA. It is required for dam-dependent methyl-directed DNA mismatch repair. May act as a 'molecular matchmaker', a protein that promotes the formation of a stable complex between two or more DNA-binding proteins in an ATP-dependent manner without itself being part of a final effector complex. In Mesorhizobium japonicum (strain LMG 29417 / CECT 9101 / MAFF 303099) (Mesorhizobium loti (strain MAFF 303099)), this protein is DNA mismatch repair protein MutL.